The primary structure comprises 177 residues: Large ribosomal subunit protein uL6 (177 aa).

The segment at 155-177 is disordered; it reads EPYKGKGVKHADERIFRKEGKKK.

This sequence belongs to the universal ribosomal protein uL6 family. In terms of assembly, part of the 50S ribosomal subunit.

In terms of biological role, this protein binds to the 23S rRNA, and is important in its secondary structure. It is located near the subunit interface in the base of the L7/L12 stalk, and near the tRNA binding site of the peptidyltransferase center. The protein is Large ribosomal subunit protein uL6 of Bartonella tribocorum (strain CIP 105476 / IBS 506).